The sequence spans 65 residues: Large ribosomal subunit protein bL31 (65 aa).

Zn(2+) contacts are provided by Cys-16, Cys-18, Cys-36, and Cys-39.

This sequence belongs to the bacterial ribosomal protein bL31 family. Type A subfamily. As to quaternary structure, part of the 50S ribosomal subunit. It depends on Zn(2+) as a cofactor.

Its function is as follows. Binds the 23S rRNA. This is Large ribosomal subunit protein bL31 from Geotalea uraniireducens (strain Rf4) (Geobacter uraniireducens).